A 45-amino-acid polypeptide reads, in one-letter code: Large ribosomal subunit protein bL34 (45 aa).

The segment at 1–45 (MTKRTFGGTSRKRKRVSGFRVRMRSHTGRRVVRTRRKRGRSRLTV) is disordered. Residues 10–45 (SRKRKRVSGFRVRMRSHTGRRVVRTRRKRGRSRLTV) are compositionally biased toward basic residues.

It belongs to the bacterial ribosomal protein bL34 family.

In Prochlorococcus marinus (strain NATL2A), this protein is Large ribosomal subunit protein bL34.